Consider the following 222-residue polypeptide: MNSTPKAVVIFSGGQDSTTCLFQAIQEFGVENVEVVTFQYGQRHAIELEKAAWIAKDLGVKQTLIDTSVIKAITSNAMMEEHEIKQEGNTPNTFVDGRNALFLLYTAIYAKGQGIRTIFTGVCETDFSGYPDCRDVFVKSMNVTLNLAMDYNFNIRTPLMYLTKKQTWALADKLGAFDYIRQHTHTCYLGVEGGCHTCPSCVLREKGLNEYLSEKTSGQKNV.

An ATP-binding site is contributed by Phe11–Leu21. Residues Cys187, Cys195, Cys198, and Cys201 each coordinate Zn(2+).

The protein belongs to the QueC family. Requires Zn(2+) as cofactor.

The enzyme catalyses 7-carboxy-7-deazaguanine + NH4(+) + ATP = 7-cyano-7-deazaguanine + ADP + phosphate + H2O + H(+). It participates in purine metabolism; 7-cyano-7-deazaguanine biosynthesis. Functionally, catalyzes the ATP-dependent conversion of 7-carboxy-7-deazaguanine (CDG) to 7-cyano-7-deazaguanine (preQ(0)). In Actinobacillus pleuropneumoniae serotype 5b (strain L20), this protein is 7-cyano-7-deazaguanine synthase.